Reading from the N-terminus, the 240-residue chain is 2-C-methyl-D-erythritol 4-phosphate cytidylyltransferase (240 aa).

The protein belongs to the IspD/TarI cytidylyltransferase family. IspD subfamily.

The catalysed reaction is 2-C-methyl-D-erythritol 4-phosphate + CTP + H(+) = 4-CDP-2-C-methyl-D-erythritol + diphosphate. Its pathway is isoprenoid biosynthesis; isopentenyl diphosphate biosynthesis via DXP pathway; isopentenyl diphosphate from 1-deoxy-D-xylulose 5-phosphate: step 2/6. Functionally, catalyzes the formation of 4-diphosphocytidyl-2-C-methyl-D-erythritol from CTP and 2-C-methyl-D-erythritol 4-phosphate (MEP). The sequence is that of 2-C-methyl-D-erythritol 4-phosphate cytidylyltransferase from Chlorobium luteolum (strain DSM 273 / BCRC 81028 / 2530) (Pelodictyon luteolum).